The sequence spans 195 residues: Calcineurin B homologous protein 1 (195 aa).

A lipid anchor (N-myristoyl glycine) is attached at G2. 4 consecutive EF-hand domains span residues 26 to 61 (SQIT…AINP), 66 to 101 (IINA…KSKD), 110 to 145 (SRSN…MVGV), and 151 to 186 (QLGS…VDVE). Residues D123, D125, D127, K129, E134, D164, D166, D168, and E175 each contribute to the Ca(2+) site.

It belongs to the calcineurin regulatory subunit family. CHP subfamily. In terms of assembly, monomer. Post-translationally, phosphorylated. In terms of processing, calcium-binding or N-myristoylation are necessary for the Na(+)/H(+) exchange activities.

The protein resides in the nucleus. Its subcellular location is the cytoplasm. It is found in the cytoskeleton. It localises to the endomembrane system. The protein localises to the endoplasmic reticulum-Golgi intermediate compartment. The protein resides in the endoplasmic reticulum. Its subcellular location is the cell membrane. It is found in the membrane. Calcium-binding protein involved in different processes such as regulation of vesicular trafficking, plasma membrane Na(+)/H(+) exchanger and gene transcription. Involved in the constitutive exocytic membrane traffic. Mediates the association between microtubules and membrane-bound organelles of the endoplasmic reticulum and Golgi apparatus and is also required for the targeting and fusion of transcytotic vesicles (TCV) with the plasma membrane. Functions as an integral cofactor in cell pH regulation by controlling plasma membrane-type Na(+)/H(+) exchange activity. Inhibits serum- and GTPase-stimulated Na(+)/H(+) exchange. Plays a role as an inhibitor of ribosomal RNA transcription. Acts as a negative regulator of the calcineurin/NFAT signaling pathway. The sequence is that of Calcineurin B homologous protein 1 (CHP1) from Gallus gallus (Chicken).